The following is a 403-amino-acid chain: Phosphopentomutase (403 aa).

Mn(2+)-binding residues include Asp13, Asp298, His303, Asp339, His340, and His351.

The protein belongs to the phosphopentomutase family. Mn(2+) is required as a cofactor.

Its subcellular location is the cytoplasm. The enzyme catalyses 2-deoxy-alpha-D-ribose 1-phosphate = 2-deoxy-D-ribose 5-phosphate. It carries out the reaction alpha-D-ribose 1-phosphate = D-ribose 5-phosphate. It participates in carbohydrate degradation; 2-deoxy-D-ribose 1-phosphate degradation; D-glyceraldehyde 3-phosphate and acetaldehyde from 2-deoxy-alpha-D-ribose 1-phosphate: step 1/2. Its function is as follows. Isomerase that catalyzes the conversion of deoxy-ribose 1-phosphate (dRib-1-P) and ribose 1-phosphate (Rib-1-P) to deoxy-ribose 5-phosphate (dRib-5-P) and ribose 5-phosphate (Rib-5-P), respectively. The protein is Phosphopentomutase of Streptococcus gordonii (strain Challis / ATCC 35105 / BCRC 15272 / CH1 / DL1 / V288).